Here is a 61-residue protein sequence, read N- to C-terminus: MLNTFSLIGICLNSTLYSSSFFFGKLPEAYAFLNPIVDIMPVIPLFFFLLAFVWQAAVSFR.

Positions M1 to G24 are excised as a propeptide. Residues I36 to A56 traverse the membrane as a helical segment.

The protein belongs to the PsbK family. As to quaternary structure, PSII is composed of 1 copy each of membrane proteins PsbA, PsbB, PsbC, PsbD, PsbE, PsbF, PsbH, PsbI, PsbJ, PsbK, PsbL, PsbM, PsbT, PsbX, PsbY, PsbZ, Psb30/Ycf12, at least 3 peripheral proteins of the oxygen-evolving complex and a large number of cofactors. It forms dimeric complexes.

It is found in the plastid. Its subcellular location is the chloroplast thylakoid membrane. Functionally, one of the components of the core complex of photosystem II (PSII). PSII is a light-driven water:plastoquinone oxidoreductase that uses light energy to abstract electrons from H(2)O, generating O(2) and a proton gradient subsequently used for ATP formation. It consists of a core antenna complex that captures photons, and an electron transfer chain that converts photonic excitation into a charge separation. This is Photosystem II reaction center protein K from Solanum bulbocastanum (Wild potato).